The sequence spans 221 residues: Transcriptional regulatory protein QseB (221 aa).

In terms of domain architecture, Response regulatory spans 2 to 116 (RILLIEDDNL…EVAARLQALI (115 aa)). The residue at position 51 (aspartate 51) is a 4-aspartylphosphate. Positions 124-218 (HSVIEQAGVK…VHGVGYALGQ (95 aa)) form a DNA-binding region, ompR/PhoB-type.

Phosphorylated by QseC.

The protein localises to the cytoplasm. Its function is as follows. Member of a two-component regulatory system QseB/QseC. This Haemophilus influenzae (strain ATCC 51907 / DSM 11121 / KW20 / Rd) protein is Transcriptional regulatory protein QseB (qseB).